Reading from the N-terminus, the 726-residue chain is Probable cadmium-transporting ATPase (726 aa).

Residues 11-74 enclose the HMA domain; sequence DKQVYRVEGF…AGAFENLKVF (64 aa). Cd(2+) contacts are provided by Cys22 and Cys25. 5 helical membrane passes run 105 to 125, 129 to 149, 163 to 179, 335 to 355, and 363 to 383; these read STLLFATLLIAFGYLSHFVNG, LVTSMLFVGSIVIGGYSLFKV, TLMTVAVIGAAIIGEWA, IIMVIAALVAVVPPLFFGGSW, and LAVLVVGCPCALVISTPISIV. Asp414 acts as the 4-aspartylphosphate intermediate in catalysis. 2 helical membrane-spanning segments follow: residues 671–693 and 698–720; these read LNIIKANITFAIGIKIIALLLVI and TLWIAILSDMGATILVALNSLRL.

The protein belongs to the cation transport ATPase (P-type) (TC 3.A.3) family. Type IB subfamily.

The protein localises to the cell membrane. The enzyme catalyses Cd(2+)(in) + ATP + H2O = Cd(2+)(out) + ADP + phosphate + H(+). In terms of biological role, couples the hydrolysis of ATP with the export of cadmium. This chain is Probable cadmium-transporting ATPase (cadA), found in Staphylococcus aureus (strain MRSA252).